Here is a 399-residue protein sequence, read N- to C-terminus: Acetate kinase (399 aa).

A Mg(2+)-binding site is contributed by Asn-10. Lys-17 provides a ligand contact to ATP. Position 91 (Arg-91) interacts with substrate. Asp-148 acts as the Proton donor/acceptor in catalysis. Residues 208-212, 283-285, and 331-335 contribute to the ATP site; these read HLGNG, DCR, and GIGEN. Residue Glu-385 participates in Mg(2+) binding.

The protein belongs to the acetokinase family. As to quaternary structure, homodimer. It depends on Mg(2+) as a cofactor. Requires Mn(2+) as cofactor.

It is found in the cytoplasm. It carries out the reaction acetate + ATP = acetyl phosphate + ADP. Its pathway is metabolic intermediate biosynthesis; acetyl-CoA biosynthesis; acetyl-CoA from acetate: step 1/2. Functionally, catalyzes the formation of acetyl phosphate from acetate and ATP. Can also catalyze the reverse reaction. The protein is Acetate kinase of Shewanella baltica (strain OS223).